The sequence spans 215 residues: Large ribosomal subunit protein uL3 (215 aa).

At Q151 the chain carries N5-methylglutamine.

It belongs to the universal ribosomal protein uL3 family. Part of the 50S ribosomal subunit. Forms a cluster with proteins L14 and L19. Methylated by PrmB.

In terms of biological role, one of the primary rRNA binding proteins, it binds directly near the 3'-end of the 23S rRNA, where it nucleates assembly of the 50S subunit. The polypeptide is Large ribosomal subunit protein uL3 (Rickettsia bellii (strain OSU 85-389)).